Here is a 132-residue protein sequence, read N- to C-terminus: Prefoldin subunit alpha (132 aa).

This sequence belongs to the prefoldin subunit alpha family. In terms of assembly, heterohexamer of two alpha and four beta subunits.

It localises to the cytoplasm. Its function is as follows. Molecular chaperone capable of stabilizing a range of proteins. Seems to fulfill an ATP-independent, HSP70-like function in archaeal de novo protein folding. This is Prefoldin subunit alpha (pfdA) from Pyrobaculum aerophilum (strain ATCC 51768 / DSM 7523 / JCM 9630 / CIP 104966 / NBRC 100827 / IM2).